The following is a 2183-amino-acid chain: Genome polyprotein (2183 aa).

The N-myristoyl glycine; by host moiety is linked to residue G2. At 2–1493 (GAQVSTQKTG…HVSRAFICLQ (1492 aa)) the chain is on the cytoplasmic side. The segment at 566-582 (FYQGPTEESVERAMGRV) is amphipathic alpha-helix. Active-site for protease 2A activity residues include H870 and D888. Residues C905 and C907 each coordinate Zn(2+). The For protease 2A activity role is filled by C959. Zn(2+)-binding residues include C965 and H967. The membrane-binding stretch occupies residues 1099-1171 (NNNWLKKFTE…EQSAPSQSDQ (73 aa)). An oligomerization region spans residues 1099-1237 (NNNWLKKFTE…SPGAGKSVAT (139 aa)). The segment at 1120–1124 (AVKIQ) is RNA-binding. The SF3 helicase domain maps to 1203–1359 (EKKMSNYIQF…SMYSQNGKIN (157 aa)). 3 residues coordinate Zn(2+): C1367, C1379, and C1384. Residues 1367-1384 (CDEECCPVNFKKCCPLVC) form a C4-type; degenerate zinc finger. Residues 1411 to 1418 (EYNHRHSV) form an RNA-binding region. Residues 1422–1427 (LEALFQ) are oligomerization. Residues 1494-1509 (ALTTFVSVAGIIYIIY) lie within the membrane without spanning it. Residues 1510–2183 (KLFAGFQGAY…TLRRKWLDAF (674 aa)) lie on the Cytoplasmic side of the membrane. O-(5'-phospho-RNA)-tyrosine is present on Y1519. Residues 1539–1717 (GPAFEFAVAM…FSASLLRHYF (179 aa)) form the Peptidase C3 domain. Active-site for protease 3C activity residues include H1578, E1609, and C1685. The RdRp catalytic domain maps to 1948-2064 (GHLRAFDYSG…SYPLPIDASL (117 aa)). Residues D1954 and D2050 each contribute to the Mg(2+) site.

This sequence belongs to the picornaviruses polyprotein family. Interacts with capsid protein VP1 and capsid protein VP3 to form heterotrimeric protomers. As to quaternary structure, interacts with capsid protein VP0, and capsid protein VP3 to form heterotrimeric protomers. Five protomers subsequently associate to form pentamers which serve as building blocks for the capsid. Interacts with capsid protein VP2, capsid protein VP3 and capsid protein VP4 following cleavage of capsid protein VP0. Interacts with host CXADR. In terms of assembly, interacts with capsid protein VP1 and capsid protein VP3 in the mature capsid. Interacts with capsid protein VP0 and capsid protein VP1 to form heterotrimeric protomers. Five protomers subsequently associate to form pentamers which serve as building blocks for the capsid. Interacts with capsid protein VP4 in the mature capsid. Interacts with protein 2C; this interaction may be important for virion morphogenesis. As to quaternary structure, interacts with capsid protein VP1 and capsid protein VP3. In terms of assembly, homodimer. Homohexamer; forms a hexameric ring structure with 6-fold symmetry characteristic of AAA+ ATPases. Interacts (via N-terminus) with host RTN3 (via reticulon domain); this interaction is important for viral replication. Interacts with capsid protein VP3; this interaction may be important for virion morphogenesis. As to quaternary structure, interacts with protein 3CD. In terms of assembly, homodimer. Interacts with host GBF1. Interacts (via GOLD domain) with host ACBD3 (via GOLD domain); this interaction allows the formation of a viral protein 3A/ACBD3 heterotetramer with a 2:2 stoichiometry, which will stimulate the recruitment of host PI4KB in order to synthesize PI4P at the viral RNA replication sites. Interacts with RNA-directed RNA polymerase. As to quaternary structure, interacts with protein 3AB and with RNA-directed RNA polymerase. In terms of assembly, interacts with Viral protein genome-linked and with protein 3CD. The cofactor is Mg(2+). Post-translationally, specific enzymatic cleavages in vivo by the viral proteases yield processing intermediates and the mature proteins. Myristoylation is required for the formation of pentamers during virus assembly. Further assembly of 12 pentamers and a molecule of genomic RNA generates the provirion. In terms of processing, during virion maturation, immature virions are rendered infectious following cleavage of VP0 into VP4 and VP2. This maturation seems to be an autocatalytic event triggered by the presence of RNA in the capsid and it is followed by a conformational change infectious virion. Post-translationally, myristoylation is required during RNA encapsidation and formation of the mature virus particle. VPg is uridylylated by the polymerase into VPg-pUpU. This acts as a nucleotide-peptide primer for the genomic RNA replication.

It localises to the virion. It is found in the host cytoplasm. The protein resides in the host cytoplasmic vesicle membrane. Its subcellular location is the host nucleus. It catalyses the reaction a ribonucleoside 5'-triphosphate + H2O = a ribonucleoside 5'-diphosphate + phosphate + H(+). It carries out the reaction Selective cleavage of Tyr-|-Gly bond in the picornavirus polyprotein.. The catalysed reaction is RNA(n) + a ribonucleoside 5'-triphosphate = RNA(n+1) + diphosphate. The enzyme catalyses Selective cleavage of Gln-|-Gly bond in the poliovirus polyprotein. In other picornavirus reactions Glu may be substituted for Gln, and Ser or Thr for Gly.. With respect to regulation, replication or transcription is subject to high level of random mutations by the nucleotide analog ribavirin. In terms of biological role, forms an icosahedral capsid of pseudo T=3 symmetry with capsid proteins VP2 and VP3. The capsid is 300 Angstroms in diameter, composed of 60 copies of each capsid protein and enclosing the viral positive strand RNA genome. Capsid protein VP1 mainly forms the vertices of the capsid. Capsid protein VP1 interacts with host CXADR to provide virion attachment to target host cells. This attachment induces virion internalization. Tyrosine kinases are probably involved in the entry process. After binding to its receptor, the capsid undergoes conformational changes. Capsid protein VP1 N-terminus (that contains an amphipathic alpha-helix) and capsid protein VP4 are externalized. Together, they shape a pore in the host membrane through which viral genome is translocated to host cell cytoplasm. Its function is as follows. Forms an icosahedral capsid of pseudo T=3 symmetry with capsid proteins VP2 and VP3. The capsid is 300 Angstroms in diameter, composed of 60 copies of each capsid protein and enclosing the viral positive strand RNA genome. Functionally, lies on the inner surface of the capsid shell. After binding to the host receptor, the capsid undergoes conformational changes. Capsid protein VP4 is released, Capsid protein VP1 N-terminus is externalized, and together, they shape a pore in the host membrane through which the viral genome is translocated into the host cell cytoplasm. Component of immature procapsids, which is cleaved into capsid proteins VP4 and VP2 after maturation. Allows the capsid to remain inactive before the maturation step. In terms of biological role, cysteine protease that cleaves viral polyprotein and specific host proteins. It is responsible for the autocatalytic cleavage between the P1 and P2 regions, which is the first cleavage occurring in the polyprotein. Also cleaves the host translation initiation factor EIF4G1, in order to shut down the capped cellular mRNA translation. Inhibits the host nucleus-cytoplasm protein and RNA trafficking by cleaving host members of the nuclear pores. Counteracts stress granule formation probably by antagonizing its assembly or promoting its dissassembly. Cleaves and inhibits host IFIH1/MDA5, thereby inhibiting the type-I IFN production and the establishment of the antiviral state. Cleaves and inhibits host MAVS, thereby inhibiting the type-I IFN production and the establishment of the antiviral state. Its function is as follows. Plays an essential role in the virus replication cycle by acting as a viroporin. Creates a pore in the host endoplasmic reticulum and as a consequence releases Ca2+ in the cytoplasm of infected cell. In turn, high levels of cytoplasmic calcium may trigger membrane trafficking and transport of viral ER-associated proteins to viroplasms, sites of viral genome replication. Functionally, induces and associates with structural rearrangements of intracellular membranes. Displays RNA-binding, nucleotide binding and NTPase activities. May play a role in virion morphogenesis and viral RNA encapsidation by interacting with the capsid protein VP3. Localizes the viral replication complex to the surface of membranous vesicles. Together with protein 3CD binds the Cis-Active RNA Element (CRE) which is involved in RNA synthesis initiation. Acts as a cofactor to stimulate the activity of 3D polymerase, maybe through a nucleid acid chaperone activity. In terms of biological role, localizes the viral replication complex to the surface of membranous vesicles. It inhibits host cell endoplasmic reticulum-to-Golgi apparatus transport and causes the disassembly of the Golgi complex, possibly through GBF1 interaction. This would result in depletion of MHC, trail receptors and IFN receptors at the host cell surface. Plays an essential role in viral RNA replication by recruiting ACBD3 and PI4KB at the viral replication sites, thereby allowing the formation of the rearranged membranous structures where viral replication takes place. Its function is as follows. Acts as a primer for viral RNA replication and remains covalently bound to viral genomic RNA. VPg is uridylylated prior to priming replication into VPg-pUpU. The oriI viral genomic sequence may act as a template for this. The VPg-pUpU is then used as primer on the genomic RNA poly(A) by the RNA-dependent RNA polymerase to replicate the viral genome. During genome replication, the VPg-RNA linkage is removed by the host TDP2, thereby accelerating replication. During the late stage of the replication cycle, host TDP2 is excluded from sites of viral RNA synthesis and encapsidation, allowing for the generation of progeny virions. Functionally, involved in the viral replication complex and viral polypeptide maturation. It exhibits protease activity with a specificity and catalytic efficiency that is different from protease 3C. Protein 3CD lacks polymerase activity. Protein 3CD binds to the 5'UTR of the viral genome. Replicates the viral genomic RNA on the surface of intracellular membranes. May form linear arrays of subunits that propagate along a strong head-to-tail interaction called interface-I. Covalently attaches UMP to a tyrosine of VPg, which is used to prime RNA synthesis. The positive stranded RNA genome is first replicated at virus induced membranous vesicles, creating a dsRNA genomic replication form. This dsRNA is then used as template to synthesize positive stranded RNA genomes. ss(+)RNA genomes are either translated, replicated or encapsidated. In terms of biological role, major viral protease that mediates proteolytic processing of the polyprotein. Cleaves host EIF5B, contributing to host translation shutoff. Also cleaves host PABPC1, contributing to host translation shutoff. Cleaves host NLRP1, triggers host N-glycine-mediated degradation of the autoinhibitory NLRP1 N-terminal fragment. This chain is Genome polyprotein, found in Coxsackievirus B4 (strain E2).